Consider the following 297-residue polypeptide: 33 kDa chaperonin (297 aa).

2 disulfide bridges follow: C232/C234 and C266/C269.

Belongs to the HSP33 family. Under oxidizing conditions two disulfide bonds are formed involving the reactive cysteines. Under reducing conditions zinc is bound to the reactive cysteines and the protein is inactive.

It localises to the cytoplasm. Functionally, redox regulated molecular chaperone. Protects both thermally unfolding and oxidatively damaged proteins from irreversible aggregation. Plays an important role in the bacterial defense system toward oxidative stress. This chain is 33 kDa chaperonin, found in Pseudomonas aeruginosa (strain UCBPP-PA14).